We begin with the raw amino-acid sequence, 884 residues long: Protein argonaute-4 (884 aa).

The PAZ domain occupies 242–361 (PVIEFMCEVL…LPLEVCNIVA (120 aa)). In terms of domain architecture, Piwi spans 532–843 (LIVVILPGKT…VAFRARYHLV (312 aa)). Positions 848–870 (DSAEGSHVSGQSNGRDPQALAKA) are disordered.

This sequence belongs to the argonaute family. Ago subfamily.

It localises to the cytoplasm. Its subcellular location is the P-body. Its function is as follows. Required for RNA-mediated gene silencing (RNAi). Binds to short RNAs such as microRNAs (miRNAs) and represses the translation of mRNAs which are complementary to them. Lacks endonuclease activity and does not appear to cleave target mRNAs. This Xenopus laevis (African clawed frog) protein is Protein argonaute-4 (ago4).